A 550-amino-acid polypeptide reads, in one-letter code: MAAKDVIFGGEARARMVEGVNILANAVKVTLGPKGRNVVLERSFGAPTVTKDGVSVAKEIELKDKLQNMGAQMVKEVASKTSDIAGDGTTTATVLAQAIVREGMKYVAAGMNPMDLKRGIDKAVTALVEELKKASKATTTSKEIAQVGSISANSDEAIGKIIADAMDKVGKEGVITVEDGKSLESELDVVEGMQFDRGYLSPYFINNPEKQSAILDNPFVLLYDKKISNIRDLLPTLEQVAKAGRPLLIIAEEVEGEALATLVVNTLRGILKVVAVKAPGFGDRRKAMLEDIACLTGGKVIAEEVGMSLEKVTLADLGTAKRIEVGKENTIIIDGAGEAKDIEARVKQVRVQIEEATSDYDREKLQERVAKLAGGVAVIKVGAATEVEMKEKKARVEDALHATRAAVEEGIVAGGGVALLRAKQAAGAIKGDNADQEAGIKLVLRAIEAPLREIVYNAGGEASVVVNAVLAGKGNYGFNAANDTYGDMIEMGILDPTKVTRTALQNAASVASLMLTTEAMVAEAPKDESGAGGGMPGGMGGMGGMGDMGM.

ATP-binding positions include 30–33, Lys51, 87–91, Gly415, 479–481, and Asp495; these read TLGP, DGTTT, and NAA.

The protein belongs to the chaperonin (HSP60) family. As to quaternary structure, forms a cylinder of 14 subunits composed of two heptameric rings stacked back-to-back. Interacts with the co-chaperonin GroES.

Its subcellular location is the cytoplasm. The catalysed reaction is ATP + H2O + a folded polypeptide = ADP + phosphate + an unfolded polypeptide.. Its function is as follows. Together with its co-chaperonin GroES, plays an essential role in assisting protein folding. The GroEL-GroES system forms a nano-cage that allows encapsulation of the non-native substrate proteins and provides a physical environment optimized to promote and accelerate protein folding. The protein is Chaperonin GroEL of Polaromonas sp. (strain JS666 / ATCC BAA-500).